Consider the following 103-residue polypeptide: EGGEPCACPHALHRVCGSDGETYSNPCTLNCAKFNGKPELVKVHDGPCEPDEDEDVCQECDGDEYKPVCGSDDITYDNNCRLECASISSSPGVELKHEGPCRT.

Kazal-like domains are found at residues 1–50 (EGGE…PCEP) and 51–103 (DEDE…PCRT). 6 disulfide bridges follow: cysteine 6–cysteine 31, cysteine 8–cysteine 27, cysteine 16–cysteine 48, cysteine 57–cysteine 84, cysteine 60–cysteine 80, and cysteine 69–cysteine 101.

It localises to the secreted. Functionally, thrombin-specific inhibitor. Appears to form 1:1 complexes with thrombin. Prevents blood clotting to allow the insect to feed on blood. This is Thrombin inhibitor rhodniin from Rhodnius prolixus (Triatomid bug).